A 488-amino-acid polypeptide reads, in one-letter code: Prostaglandin E2 receptor EP4 subtype (488 aa).

Over 1-19 (MSIPGVNASFSSTPERLNS) the chain is Extracellular. The N-linked (GlcNAc...) asparagine glycan is linked to N7. A helical membrane pass occupies residues 20–43 (PVTIPAVMFIFGVVGNLVAIVVLC). Residues 44-55 (KSRKEQKETTFY) are Cytoplasmic-facing. The helical transmembrane segment at 56–79 (TLVCGLAVTDLLGTLLVSPVTIAT) threads the bilayer. At 80–96 (YMKGQWPGDQALCDYST) the chain is on the extracellular side. Residues C92 and C170 are joined by a disulfide bond. A helical transmembrane segment spans residues 97-115 (FILLFFGLSGLSIICAMSI). Residues 116-135 (ERYLAINHAYFYSHYVDKRL) lie on the Cytoplasmic side of the membrane. The helical transmembrane segment at 136–160 (AGLTLFAVYASNVLFCALPNMGLGR) threads the bilayer. The Extracellular segment spans residues 161–184 (SERQYPGTWCFIDWTTNVTAYAAF). Residues 185–211 (SYMYAGFSSFLILATVLCNVLVCGALL) form a helical membrane-spanning segment. The Cytoplasmic segment spans residues 212–270 (RMLRQFMRRTSLGTEQHHAAAAAAVASVACRGHAAASPALQRLSDFRRRRSFRRIAGAE). A helical transmembrane segment spans residues 271–298 (IQMVILLIATSLVVLICSIPLVVRVFIN). Residues 299–315 (QLYQPSVVKDISRNPDL) lie on the Extracellular side of the membrane. Residues 316–335 (QAIRIASVNPILDPWIYILL) traverse the membrane as a helical segment. Residues 336–488 (RKTVLSKAIE…ETLKLSEKCI (153 aa)) lie on the Cytoplasmic side of the membrane. Residues 358–380 (GRDGSAQHCSESRRTSSAMSGHS) are disordered. Phosphoserine occurs at positions 377, 380, 382, and 385.

Belongs to the G-protein coupled receptor 1 family. As to quaternary structure, interacts with FEM1A. Phosphorylation mediates agonist-mediated desensitization by promoting cytoplasmic retention.

It localises to the cell membrane. Receptor for prostaglandin E2 (PGE2). The activity of this receptor is mediated by G(s) proteins that stimulate adenylate cyclase. Has a relaxing effect on smooth muscle. May play an important role in regulating renal hemodynamics, intestinal epithelial transport, adrenal aldosterone secretion, and uterine function. This Rattus norvegicus (Rat) protein is Prostaglandin E2 receptor EP4 subtype (Ptger4).